A 100-amino-acid polypeptide reads, in one-letter code: Urease subunit gamma (100 aa).

The protein belongs to the urease gamma subunit family. In terms of assembly, heterotrimer of UreA (gamma), UreB (beta) and UreC (alpha) subunits. Three heterotrimers associate to form the active enzyme.

It localises to the cytoplasm. It carries out the reaction urea + 2 H2O + H(+) = hydrogencarbonate + 2 NH4(+). It participates in nitrogen metabolism; urea degradation; CO(2) and NH(3) from urea (urease route): step 1/1. This is Urease subunit gamma from Ralstonia pickettii (strain 12J).